The primary structure comprises 1047 residues: uncharacterized protein (1047 aa).

K17 is subject to N6-acetyllysine. Disordered stretches follow at residues P172 to S208 and R236 to L283. S208 is modified (phosphoserine). Residues N237–A254 show a composition bias toward polar residues. The span at H268 to L283 shows a compositional bias: pro residues. A phosphoserine mark is found at S299 and S391. Position 397 is a phosphothreonine (T397). 7 disordered regions span residues E448 to V469, E482 to D504, P519 to S567, P668 to G690, V714 to L763, E931 to A1004, and P1021 to L1047. Residues S455, S496, and S497 each carry the phosphoserine modification. 2 stretches are compositionally biased toward low complexity: residues P729 to P741 and P751 to S762. Residues S936, S956, S988, and S996 each carry the phosphoserine modification. Positions A978–S996 are enriched in low complexity.

This is an uncharacterized protein from Homo sapiens (Human).